We begin with the raw amino-acid sequence, 3011 residues long: Genome polyprotein (3011 aa).

N-acetylserine; by host is present on S2. The interval 2-23 (STNPKPQKKNKRNTNRRPQDVK) is interaction with STAT1. The interval 2 to 58 (STNPKPQKKNKRNTNRRPQDVKFPGGGQIVGGVYLLPRRGPRLGVRATRKTSERSQP) is interaction with EIF2AK2/PKR. Residues 2 to 59 (STNPKPQKKNKRNTNRRPQDVKFPGGGQIVGGVYLLPRRGPRLGVRATRKTSERSQPR) are interaction with DDX3X. Residues 2–75 (STNPKPQKKN…PKARRPEGRT (74 aa)) form a disordered region. Residues 2–168 (STNPKPQKKN…EDGVNYATGN (167 aa)) are Cytoplasmic-facing. Short sequence motifs (nuclear localization signal) lie at residues 5–13 (PKPQKKNKR) and 38–43 (PRRGPR). Residues 7 to 16 (PQKKNKRNTN) are compositionally biased toward basic residues. Positions 32–47 (GGVYLLPRRGPRLGVR) are enriched in low complexity. S53 is subject to Phosphoserine; by host. 2 short sequence motifs (nuclear localization signal) span residues 58–64 (PRGRRQP) and 66–71 (PKARRP). The span at 58–68 (PRGRRQPIPKA) shows a compositional bias: basic residues. Phosphoserine; by host is present on S99. The important for endoplasmic reticulum and mitochondrial localization stretch occupies residues 112–152 (PRRRSRNLGKVIDTLTCGFADLMGYIPLVGAPLGGAARALA). S116 bears the Phosphoserine; by host PKA mark. Residues 122-173 (VIDTLTCGFADLMGYIPLVGAPLGGAARALAHGVRVLEDGVNYATGNLPGCS) form an interaction with APOA2 region. The segment at 164-167 (YATG) is important for lipid droplets localization. Residues 169-189 (LPGCSFSIFLLALLSCLTVPA) form a helical membrane-spanning segment. A propeptide spans 178–191 (LLALLSCLTVPASA) (ER anchor for the core protein, removed in mature form by host signal peptidase). Topologically, residues 190–358 (SAYQVRNSTG…AGAHWGVLAG (169 aa)) are lumenal. N-linked (GlcNAc...) asparagine; by host glycans are attached at residues N196, N209, and N234. An important for fusion region spans residues 265-296 (LVGSATLCSALYVGDLCGSVFLVGQLFTFSPR). N305 carries N-linked (GlcNAc...) asparagine; by host glycosylation. The chain crosses the membrane as a helical span at residues 359 to 379 (IAYFSMVGNWAKVLVVLLLFA). The Lumenal segment spans residues 380–725 (GVDAETHVTG…WEYVVLLFLL (346 aa)). An HVR1 region spans residues 385 to 411 (THVTGGSAGHTVSGFVSLLAPGAKQNV). Residues N417, N423, N430, and N448 are each glycosylated (N-linked (GlcNAc...) (high mannose) asparagine; by host). Cystine bridges form between C429-C552, C452-C459, C486-C494, and C503-C508. The segment at 474–480 (YANGSGP) is HVR2. An N-linked (GlcNAc...) asparagine; by host glycan is attached at N476. The tract at residues 481–493 (DQRPYCWHYPPKP) is CD81-binding 1. N-linked (GlcNAc...) (high mannose) asparagine; by host glycosylation is present at N532. The segment at 543-551 (RPPLGNWFG) is CD81-binding 2. N556 carries an N-linked (GlcNAc...) (high mannose) asparagine; by host glycan. C564 and C569 are disulfide-bonded. The N-linked (GlcNAc...) (high mannose) asparagine; by host glycan is linked to N576. 3 disulfide bridges follow: C581/C585, C597/C620, and C607/C644. 2 N-linked (GlcNAc...) (high mannose) asparagine; by host glycosylation sites follow: N623 and N645. A disulfide bridge links C652 with C677. The interval 660 to 671 (SELSPLLLTTTQ) is EIF2AK2/eIF2-alpha phosphorylation homology domain (PePHD). Residues 726–746 (LADARVCSCLWMMLLISQAEA) traverse the membrane as a helical segment. Topologically, residues 747-757 (ALENLVILNAA) are lumenal. Residues 758–778 (SLAGTHGLVSFLVFFCFAWYL) traverse the membrane as a helical segment. Residues 779–781 (KGK) are Cytoplasmic-facing. The chain crosses the membrane as a helical span at residues 782–803 (WVPGAVYTFYGMWPLLLLLLAL). The Lumenal portion of the chain corresponds to 804–813 (PQRAYALDTE). A helical membrane pass occupies residues 814 to 834 (VAASCGGVVLVGLMALTLSPY). Residues 835 to 838 (YKRY) are Cytoplasmic-facing. The helical transmembrane segment at 839 to 859 (ISWCLWWLQYFLTRVEAQLHV) threads the bilayer. Topologically, residues 860-881 (WIPPLNVRGGRDAVILLMCAVH) are lumenal. Residues 882 to 902 (PTLVFDITKLLLAVFGPLWIL) traverse the membrane as a helical segment. One can recognise a Peptidase C18 domain in the interval 899 to 1026 (LWILQASLLK…GMVSKGWRLL (128 aa)). The Cytoplasmic segment spans residues 903–1657 (QASLLKVPYF…CMSADLEVVT (755 aa)). The interval 904-1206 (ASLLKVPYFV…PVENLETTMR (303 aa)) is protease NS2-3. Residue C922 is the site of S-palmitoyl cysteine; by host attachment. The interaction with host SCPS1 stretch occupies residues 929-949 (IGGHYVQMVIIKLGALTGTYV). Catalysis depends on for protease NS2 activity; shared with dimeric partner residues H952, E972, and C993. In terms of domain architecture, Peptidase S29 spans 1027-1208 (APITAYAQQT…ENLETTMRSP (182 aa)). Active-site charge relay system; for serine protease NS3 activity residues include H1083 and D1107. Zn(2+)-binding residues include C1123 and C1125. S1165 acts as the Charge relay system; for serine protease NS3 activity in catalysis. 2 residues coordinate Zn(2+): C1171 and H1175. The 153-residue stretch at 1217 to 1369 (PVVPQSFQVA…PNIEEVALST (153 aa)) folds into the Helicase ATP-binding domain. Residue 1230–1237 (APTGSGKS) participates in ATP binding. 2 residues coordinate Mg(2+): S1237 and E1317. A DECH box motif is present at residues 1316–1319 (DECH). The tract at residues 1486 to 1497 (QRRGRTGRGKPG) is RNA-binding. Residues 1658–1678 (STWVLVGGVLAALAAYCLSTG) form a helical membrane-spanning segment. The interval 1679–1690 (CVVIVGRVVLSG) is NS3-binding. Residues 1679–1805 (CVVIVGRVVL…AVTSPLTTSQ (127 aa)) lie on the Cytoplasmic side of the membrane. Residues 1806–1826 (TLLFNILGGWVAAQLAAPGAA) traverse the membrane as a helical segment. At 1827-1828 (TA) the chain is on the lumenal side. Residues 1829–1849 (FVGAGLAGAAIGSVGLGKVLI) form a helical membrane-spanning segment. The glycine zipper stretch occupies residues 1833 to 1861 (GLAGAAIGSVGLGKVLIDILAGYGAGVAG). A topological domain (cytoplasmic) is located at residue D1850. The chain crosses the membrane as a helical span at residues 1851–1871 (ILAGYGAGVAGALVAFKIMSG). Topologically, residues 1872–1881 (EVPSTEDLVN) are lumenal. A helical membrane pass occupies residues 1882–1902 (LLPAILSPGALVVGVVCAAIL). The Cytoplasmic portion of the chain corresponds to 1903–1972 (RRHVGPGEGA…WISSECTTPC (70 aa)). S-palmitoyl cysteine; by host attachment occurs at residues C1968 and C1972. The stretch at 1973–2003 (SGSWLRDIWDWICEVLSDFKTWLKAKLMPQL) is an intramembrane region. The segment at 1978 to 1998 (RDIWDWICEVLSDFKTWLKAK) is membrane-binding. The Cytoplasmic segment spans residues 2004–2990 (PGIPFVSCQR…YHSVSHARPR (987 aa)). Residues 2005 to 2221 (GIPFVSCQRG…KATCTANHDS (217 aa)) form an RNA-binding region. Zn(2+)-binding residues include C2011, C2029, C2031, and C2052. Residues 2120–2208 (EFFTELDGVR…ASSSASQLSA (89 aa)) form an FKBP8-binding region. A transcriptional activation region spans residues 2120–2332 (EFFTELDGVR…PVPPPRKKRT (213 aa)). The segment at 2135-2139 (PPCKP) is interaction with non-structural protein 4A. The segment at 2189–2441 (RLARGSPPSV…TPCAAEEQKL (253 aa)) is interaction with host SKP2. Residue S2194 is modified to Phosphoserine; by host; in p56. A phosphoserine; by host; in p58 mark is found at S2197, S2201, S2204, S2207, and S2210. The segment at 2206 to 2245 (LSAPSLKATCTANHDSPDAELIEANLLWRQEMGGNITRVE) is ISDR. Positions 2210-2275 (SLKATCTANH…REISVPAEIL (66 aa)) are EIF2AK2/PKR-binding. The segment at 2249 to 2306 (KVVILDSFDPLVAEEDEREISVPAEILRKSRRFAQALPVWARPDYNPPLVETWKKPDY) is NS4B-binding. Disordered stretches follow at residues 2312–2334 (HGCP…RTVV) and 2351–2408 (SFGS…WSTV). Over residues 2315-2326 (PLPPPKSPPVPP) the composition is skewed to pro residues. S2321 is subject to Phosphoserine; by host. Positions 2322–2325 (PPVP) match the SH3-binding motif. The Nuclear localization signal motif lies at 2326 to 2334 (PPRKKRTVV). An interaction with host IFI27 region spans residues 2332–2441 (TVVLTESTLS…TPCAAEEQKL (110 aa)). Over residues 2351 to 2369 (SFGSSSTSGITGDNTTTSS) the composition is skewed to low complexity. A V3 region spans residues 2354–2377 (SSSTSGITGDNTTTSSEPAPSGCP). Phosphoserine; by host occurs at positions 2449 and 2462. The RdRp catalytic domain maps to 2634 to 2752 (PMGFSYDTRC…ICESAGVQED (119 aa)). D2640, D2738, and D2739 together coordinate Mg(2+). A helical membrane pass occupies residues 2991–3011 (WIWFCLLLLAAGVGIYLLPNR).

This sequence belongs to the hepacivirus polyprotein family. In terms of assembly, homooligomer. Interacts with E1 (via C-terminus). Interacts with the non-structural protein 5A. Interacts (via N-terminus) with host STAT1 (via SH2 domain); this interaction results in decreased STAT1 phosphorylation and ubiquitin-mediated proteasome-dependent STAT1 degradation, leading to decreased IFN-stimulated gene transcription. Interacts with host STAT3; this interaction constitutively activates STAT3. Interacts with host LTBR receptor. Interacts with host TNFRSF1A receptor and possibly induces apoptosis. Interacts with host HNRPK. Interacts with host YWHAE. Interacts with host UBE3A/E6AP. Interacts with host DDX3X. Interacts with host APOA2. Interacts with host RXRA protein. Interacts with host SP110 isoform 3/Sp110b; this interaction sequesters the transcriptional corepressor SP110 away from the nucleus. Interacts with host CREB3 nuclear transcription protein; this interaction triggers cell transformation. Interacts with host ACY3. Interacts with host C1QR1. Interacts with host RBM24; this interaction, which enhances the interaction of the mature core protein with 5'-UTR, may inhibit viral translation and favor replication. Interacts with host EIF2AK2/PKR; this interaction induces the autophosphorylation of EIF2AK2. Part of the viral assembly initiation complex composed of NS2, E1, E2, NS3, NS4A, NS5A and the mature core protein. As to quaternary structure, forms a heterodimer with envelope glycoprotein E2. Interacts with mature core protein. Interacts with protease NS2. The heterodimer E1/E2 interacts with host CLDN1; this interaction plays a role in viral entry into host cell. Interacts with host SPSB2 (via C-terminus). Part of the viral assembly initiation complex composed of NS2, E1, E2, NS3, NS4A, NS5A and the mature core protein. Interacts with host NEURL3; this interaction prevents E1 binding to glycoprotein E2. Forms a heterodimer with envelope glycoprotein E1. Interacts with host CD81 and SCARB1 receptors; these interactions play a role in viral entry into host cell. Interacts with host EIF2AK2/PKR; this interaction inhibits EIF2AK2 and probably allows the virus to evade the innate immune response. Interacts with host CD209/DC-SIGN and CLEC4M/DC-SIGNR. Interact with host SPCS1; this interaction is essential for viral particle assembly. Interacts with protease NS2. The heterodimer E1/E2 interacts with host CLDN1; this interaction plays a role in viral entry into host cell. Part of the viral assembly initiation complex composed of NS2, E1, E2, NS3, NS4A, NS5A and the mature core protein. Interacts with host SLC3A2/4F2hc; the interaction may facilitate viral entry into host cell. Interacts with human PLSCR1. In terms of assembly, homohexamer. Homoheptamer. Interacts with protease NS2. As to quaternary structure, homodimer. Interacts with host SPCS1; this interaction is essential for viral particle assembly. Interacts with envelope glycoprotein E1. Interacts with envelope glycoprotein E2. Interacts with viroporin p7. Interacts with serine protease/helicase NS3. Part of the replication complex composed of NS2, NS3, NS4A, NS4B, NS5A and the RNA-directed RNA polymerase embedded in an ER-derived membranous web. Part of the viral assembly initiation complex composed of NS2, E1, E2, NS3, NS4A, NS5A and the mature core protein. Interacts with protease NS2. Interacts with non-structural protein 4A; this interaction stabilizes the folding of NS3 serine protease. NS3-NS4A interaction is essential for NS3 activation and allows membrane anchorage of the latter. NS3/NS4A complex also prevents phosphorylation of host IRF3, thus preventing the establishment of dsRNA induced antiviral state. Interacts with host MAVS; this interaction leads to the cleavage and inhibition of host MAVS. Interacts with host TICAM1; this interaction leads to the cleavage and inhibition of host TICAM1. Interacts with host TANK-binding kinase/TBK1; this interaction results in the inhibition of the association between TBK1 and IRF3, which leads to the inhibition of IRF3 activation. Interacts with host RBM24. Part of the replication complex composed of NS2, NS3, NS4A, NS4B, NS5A and the RNA-directed RNA polymerase embedded in an ER-derived membranous web. Part of the viral assembly initiation complex composed of NS2, E1, E2, NS3, NS4A, NS5A and the mature core protein. In terms of assembly, interacts with NS3 serine protease; this interaction stabilizes the folding of NS3 serine protease. NS3-NS4A interaction is essential for NS3 activation and allows membrane anchorage of the latter. Interacts with non-structural protein 5A (via N-terminus). Part of the replication complex composed of NS2, NS3, NS4A, NS4B, NS5A and the RNA-directed RNA polymerase embedded in an ER-derived membranous web. Part of the viral assembly initiation complex composed of NS2, E1, E2, NS3, NS4A, NS5A and the mature core protein. As to quaternary structure, homomultimer. Interacts with non-structural protein NS5A. Interacts with host PLA2G4C; this interaction likely initiates the recruitment of replication complexes to lipid droplets. Interacts with host STING; this interaction disrupts the interaction between STING and TBK1 thereby suppressing the interferon signaling. Part of the replication complex composed of NS2, NS3, NS4A, NS4B, NS5A and the RNA-directed RNA polymerase embedded in an ER-derived membranous web. Monomer. Homodimer; dimerization is required for RNA-binding. Interacts with mature core protein. Interacts (via N-terminus) with non-structural protein 4A. Interacts with non-structural protein 4B. Interacts with RNA-directed RNA polymerase. Part of the viral assembly initiation complex composed of NS2, E1, E2, NS3, NS4A, NS5A and the mature core protein. Part of the replication complex composed of NS2, NS3, NS4A, NS4B, NS5A and the RNA-directed RNA polymerase. Interacts with host GRB2. Interacts with host BIN1. Interacts with host PIK3R1. Interacts with host SRCAP. Interacts with host FKBP8. Interacts with host VAPB. Interacts with host EIF2AK2/PKR; this interaction leads to disruption of EIF2AK2 dimerization by NS5A and probably allows the virus to evade the innate immune response. Interacts (via N-terminus) with host PACSIN2 (via N-terminus); this interaction attenuates protein kinase C alpha-mediated phosphorylation of PACSIN2 by disrupting the interaction between PACSIN2 and PRKCA. Interacts (via N-terminus) with host SRC kinase (via SH2 domain). Interacts with most Src-family kinases. Interacts with host IFI27 and SKP2; promotes the ubiquitin-mediated proteasomal degradation of NS5A. Interacts with host GPS2. Interacts with host TNFRSF21; this interaction allows the modulation by the virus of JNK, p38 MAPK, STAT3, and Akt signaling pathways in a DR6-dependent manner. Interacts (via N-terminus) with host CIDEB (via N-terminus); this interaction seems to regulate the association of HCV particles with APOE. Interacts with host CHKA/Choline Kinase-alpha; CHKA bridges host PI4KA and NS5A and potentiates NS5A-stimulated PI4KA activity, which then facilitates the targeting of the ternary complex to the ER for viral replication. Interacts with host SPSB2 (via C-terminus); this interaction targets NS5A for ubiquitination and degradation. Interacts with host RAB18; this interaction may promote the association of NS5A and other replicase components with lipid droplets. Interacts with host TRIM14; this interaction induces the degradation of NS5A. In terms of assembly, homooligomer. Interacts with non-structural protein 5A. Interacts with host VAPB. Interacts with host PRK2/PKN2. Interacts with host HNRNPA1 and SEPT6; these interactions facilitate viral replication. Part of the replication complex composed of NS2, NS3, NS4A, NS4B, NS5A and the RNA-directed RNA polymerase. Initiates RNA transcription/replication at a flavin adenine dinucleotide (FAD), resulting in a 5'- FAD cap on viral RNAs. In this way, recognition of viral 5' RNA by host pattern recognition receptors can be bypassed, thereby evading activation of antiviral pathways. Requires Zn(2+) as cofactor. The cofactor is Mg(2+). In terms of processing, specific enzymatic cleavages in vivo yield mature proteins. The structural proteins, core, E1, E2 and p7 are produced by proteolytic processing by host signal peptidases. The core protein precursor is synthesized as a 23 kDa protein which is retained in the ER membrane through the hydrophobic signal peptide. Cleavage by the signal peptidase releases the 21 kDa mature core protein. The cleavage of the core protein precursor occurs between aminoacids 176 and 188 but the exact cleavage site is not known. Some degraded forms of the core protein appear as well during the course of infection. The other proteins (p7, NS2, NS3, NS4A, NS4B, NS5A and NS5B) are cleaved by the viral proteases. Autoprocessing between NS2 and NS3 is mediated by the NS2 cysteine protease catalytic domain and regulated by the NS3 N-terminal domain. Post-translationally, phosphorylated by host PKC and PKA. Ubiquitinated; mediated by UBE3A and leading to core protein subsequent proteasomal degradation. In terms of processing, highly N-glycosylated. Post-translationally, palmitoylation is required for NS2/3 autoprocessing and E2 recruitment to membranes. Palmitoylated. This modification may play a role in its polymerization or in protein-protein interactions. In terms of processing, cleaved by host caspases which are probably activated by the viral infection. Post-translationally, ubiquitinated. Ubiquitination, most probably at Lys-2350, mediated by host IFI27 and SKP2 leads to proteasomal degradation, restricting viral infection. Phosphorylated on serines in a basal form termed p56. p58 is a hyperphosphorylated form of p56. p56 and p58 coexist in the cell in roughly equivalent amounts. Hyperphosphorylation is dependent on the presence of NS4A. Host CSNK1A1/CKI-alpha or RPS6KB1 kinases may be responsible for NS5A phosphorylation. Phosphorylated NS5A is involved in viral replication. In terms of processing, tyrosine phosphorylation is essential for the interaction with host SRC. Post-translationally, the N-terminus is phosphorylated by host PRK2/PKN2.

The protein localises to the host endoplasmic reticulum membrane. The protein resides in the host mitochondrion membrane. It is found in the virion. It localises to the host cytoplasm. Its subcellular location is the host nucleus. The protein localises to the host lipid droplet. The protein resides in the virion membrane. It is found in the host mitochondrion. It localises to the host cell membrane. Its subcellular location is the host perinuclear region. The enzyme catalyses Hydrolysis of four peptide bonds in the viral precursor polyprotein, commonly with Asp or Glu in the P6 position, Cys or Thr in P1 and Ser or Ala in P1'.. The catalysed reaction is a ribonucleoside 5'-triphosphate + H2O = a ribonucleoside 5'-diphosphate + phosphate + H(+). It catalyses the reaction ATP + H2O = ADP + phosphate + H(+). It carries out the reaction RNA(n) + a ribonucleoside 5'-triphosphate = RNA(n+1) + diphosphate. Inhibited by the antiviral drug hexamethylene amiloride. Inhibition by amantadine appears to be genotype-dependent. Also inhibited by long-alkyl-chain iminosugar derivatives. Its activity is regulated as follows. Activity is up-regulated by PRK2/PKN2-mediated phosphorylation. Functionally, packages viral RNA to form a viral nucleocapsid, and promotes virion budding. Participates in the viral particle production as a result of its interaction with the non-structural protein 5A. Binds RNA and may function as a RNA chaperone to induce the RNA structural rearrangements taking place during virus replication. Modulates viral translation initiation by interacting with viral IRES and 40S ribosomal subunit. Affects various cell signaling pathways, host immunity and lipid metabolism. Prevents the establishment of cellular antiviral state by blocking the interferon-alpha/beta (IFN-alpha/beta) and IFN-gamma signaling pathways and by blocking the formation of phosphorylated STAT1 and promoting ubiquitin-mediated proteasome-dependent degradation of STAT1. Activates STAT3 leading to cellular transformation. Regulates the activity of cellular genes, including c-myc and c-fos. May repress the promoter of p53, and sequester CREB3 and SP110 isoform 3/Sp110b in the cytoplasm. Represses cell cycle negative regulating factor CDKN1A, thereby interrupting an important check point of normal cell cycle regulation. Targets transcription factors involved in the regulation of inflammatory responses and in the immune response: suppresses TNF-induced NF-kappa-B activation, and activates AP-1. Binds to dendritic cells (DCs) via C1QR1, resulting in down-regulation of T-lymphocytes proliferation. Alters lipid metabolism by interacting with hepatocellular proteins involved in lipid accumulation and storage. Induces up-regulation of FAS promoter activity, and thereby contributes to the increased triglyceride accumulation in hepatocytes (steatosis). Its function is as follows. Forms a heterodimer with envelope glycoprotein E2, which mediates virus attachment to the host cell, virion internalization through clathrin-dependent endocytosis and fusion with host membrane. Fusion with the host cell is most likely mediated by both E1 and E2, through conformational rearrangements of the heterodimer required for fusion rather than a classical class II fusion mechanism. E1/E2 heterodimer binds host apolipoproteins such as APOB and APOE thereby forming a lipo-viro-particle (LVP). APOE associated to the LVP allows the initial virus attachment to cell surface receptors such as the heparan sulfate proteoglycans (HSPGs), syndecan-1 (SDC1), syndecan-1 (SDC2), the low-density lipoprotein receptor (LDLR) and scavenger receptor class B type I (SCARB1). The cholesterol transfer activity of SCARB1 allows E2 exposure and binding of E2 to SCARB1 and the tetraspanin CD81. E1/E2 heterodimer binding on CD81 activates the epithelial growth factor receptor (EGFR) signaling pathway. Diffusion of the complex E1-E2-EGFR-SCARB1-CD81 to the cell lateral membrane allows further interaction with Claudin 1 (CLDN1) and occludin (OCLN) to finally trigger HCV entry. In terms of biological role, forms a heterodimer with envelope glycoprotein E1, which mediates virus attachment to the host cell, virion internalization through clathrin-dependent endocytosis and fusion with host membrane. Fusion with the host cell is most likely mediated by both E1 and E2, through conformational rearrangements of the heterodimer required for fusion rather than a classical class II fusion mechanism. The interaction between envelope glycoprotein E2 and host apolipoprotein E/APOE allows the proper assembly, maturation and infectivity of the viral particles. This interaction is probably promoted via the up-regulation of cellular autophagy by the virus. E1/E2 heterodimer binds host apolipoproteins such as APOB and APOE thereby forming a lipo-viro-particle (LVP). APOE associated to the LVP allows the initial virus attachment to cell surface receptors such as the heparan sulfate proteoglycans (HSPGs), syndecan-1 (SDC1), syndecan-1 (SDC2), the low-density lipoprotein receptor (LDLR) and scavenger receptor class B type I (SCARB1). The cholesterol transfer activity of SCARB1 allows E2 exposure and binding of E2 to SCARB1 and the tetraspanin CD81. E1/E2 heterodimer binding on CD81 activates the epithelial growth factor receptor (EGFR) signaling pathway. Diffusion of the complex E1-E2-EGFR-SCARB1-CD81 to the cell lateral membrane allows further interaction with Claudin 1 (CLDN1) and occludin (OCLN) to finally trigger HCV entry. Inhibits host EIF2AK2/PKR activation, preventing the establishment of an antiviral state. Viral ligand for CD209/DC-SIGN and CLEC4M/DC-SIGNR, which are respectively found on dendritic cells (DCs), and on liver sinusoidal endothelial cells and macrophage-like cells of lymph node sinuses. These interactions allow the capture of circulating HCV particles by these cells and subsequent facilitated transmission to permissive cells such as hepatocytes and lymphocyte subpopulations. The interaction between E2 and host amino acid transporter complex formed by SLC3A2 and SLC7A5/LAT1 may facilitate viral entry into host cell. Ion channel protein that acts as a viroporin and plays an essential role in the assembly, envelopment and secretion of viral particles. Regulates the host cell secretory pathway, which induces the intracellular retention of viral glycoproteins and favors assembly of viral particles. Creates a pore in acidic organelles and releases Ca(2+) and H(+) in the cytoplasm of infected cells, leading to a productive viral infection. High levels of cytoplasmic Ca(2+) may trigger membrane trafficking and transport of viral ER-associated proteins to viroplasms, sites of viral genome replication. This ionic imbalance induces the assembly of the inflammasome complex, which triggers the maturation of pro-IL-1beta into IL-1beta through the action of caspase-1. Targets also host mitochondria and induces mitochondrial depolarization. In addition of its role as a viroporin, acts as a lipid raft adhesion factor. Functionally, cysteine protease required for the proteolytic auto-cleavage between the non-structural proteins NS2 and NS3. The N-terminus of NS3 is required for the function of NS2 protease (active region NS2-3). Promotes the initiation of viral particle assembly by mediating the interaction between structural and non-structural proteins. Its function is as follows. Displays three enzymatic activities: serine protease with a chymotrypsin-like fold, NTPase and RNA helicase. NS3 serine protease, in association with NS4A, is responsible for the cleavages of NS3-NS4A, NS4A-NS4B, NS4B-NS5A and NS5A-NS5B. The NS3/NS4A complex prevents phosphorylation of host IRF3, thus preventing the establishment of dsRNA induced antiviral state. The NS3/NS4A complex induces host amino acid transporter component SLC3A2, thus contributing to HCV propagation. NS3 RNA helicase binds to RNA and unwinds both dsDNA and dsRNA in the 3' to 5' direction, and likely resolves RNA complicated stable secondary structures in the template strand. Binds a single ATP and catalyzes the unzipping of a single base pair of dsRNA. Inhibits host antiviral proteins TBK1 and IRF3 thereby preventing the establishment of an antiviral state. Cleaves host MAVS/CARDIF thereby preventing the establishment of an antiviral state. Cleaves host TICAM1/TRIF, thereby disrupting TLR3 signaling and preventing the establishment of an antiviral state. In terms of biological role, the NS3/NS4A complex prevents phosphorylation of host IRF3, thus preventing the establishment of dsRNA induced antiviral state. The NS3/NS4A complex induces host amino acid transporter component SLC3A2, thus contributing to HCV propagation. Induces a specific membrane alteration that serves as a scaffold for the virus replication complex. This membrane alteration gives rise to the so-called ER-derived membranous web that contains the replication complex. NS4B self-interaction contributes to its function in membranous web formation. Promotes host TRIF protein degradation in a CASP8-dependent manner thereby inhibiting host TLR3-mediated interferon signaling. Disrupts the interaction between STING and TBK1 contributing to the inhibition of interferon signaling. Functionally, phosphorylated protein that is indispensable for viral replication and assembly. Both hypo- and hyperphosphorylated states are required for the viral life cycle. The hyperphosphorylated form of NS5A is an inhibitor of viral replication. Involved in RNA-binding and especially in binding to the viral genome. Zinc is essential for RNA-binding. Participates in the viral particle production as a result of its interaction with the mature viral core protein. Its interaction with host VAPB may target the viral replication complex to vesicles. Down-regulates viral IRES translation initiation. Mediates interferon resistance, presumably by interacting with and inhibiting host EIF2AK2/PKR. Prevents BIN1-induced apoptosis. Acts as a transcriptional activator of some host genes important for viral replication when localized in the nucleus. Via the interaction with host PACSIN2, modulates lipid droplet formation in order to promote virion assembly. Modulates TNFRSF21/DR6 signaling pathway for viral propagation. Its function is as follows. RNA-dependent RNA polymerase that performs primer-template recognition and RNA synthesis during viral replication. Initiates RNA transcription/replication at a flavin adenine dinucleotide (FAD), resulting in a 5'- FAD cap on viral RNAs. In this way, recognition of viral 5' RNA by host pattern recognition receptors can be bypassed, thereby evading activation of antiviral pathways. In Homo sapiens (Human), this protein is Genome polyprotein.